A 60-amino-acid polypeptide reads, in one-letter code: Cecropin-B (60 aa).

The first 25 residues, 1–25 (MNFTKLFILVAIAVLVVVGVQPVDG), serve as a signal peptide directing secretion. At leucine 59 the chain carries Leucine amide.

Belongs to the cecropin family.

The protein resides in the secreted. In terms of biological role, cecropins have lytic and antibacterial activity against several Gram-positive and Gram-negative bacteria. This chain is Cecropin-B (CecB), found in Anopheles gambiae (African malaria mosquito).